The following is a 242-amino-acid chain: Probable transcriptional regulatory protein LSL_0422 (242 aa).

Positions 1–21 (MSGHSKWHNIQGRKNAQDAKR) are disordered.

It belongs to the TACO1 family.

The protein localises to the cytoplasm. The sequence is that of Probable transcriptional regulatory protein LSL_0422 from Ligilactobacillus salivarius (strain UCC118) (Lactobacillus salivarius).